The primary structure comprises 189 residues: Rho-related protein racM (189 aa).

Residue 12-19 (GDYGVGKT) participates in GTP binding. Positions 35–43 (YVPTALDNF) match the Effector region motif. GTP-binding positions include 60–64 (DTAGG) and 118–121 (TKID). Cys-186 is subject to Cysteine methyl ester. Cys-186 is lipidated: S-geranylgeranyl cysteine. The propeptide at 187–189 (IIL) is removed in mature form.

The protein belongs to the small GTPase superfamily. Rho family.

Its subcellular location is the cell membrane. The chain is Rho-related protein racM (racM) from Dictyostelium discoideum (Social amoeba).